We begin with the raw amino-acid sequence, 447 residues long: GA-binding protein subunit beta-2 (447 aa).

ANK repeat units lie at residues 5–34 (DLGK…PFTT), 37–66 (LGTS…SRDA), 70–99 (VDRT…DVNA), 103–132 (LKMT…DVHA), and 136–166 (FDKS…QVNA). Ser-253 is subject to Phosphoserine. Residues 345 to 395 (EESKEGTERELLQQRLQEANRRAQEYRHQLLKKEQEAEQYRLRLEAMARQQ) are a coiled coil. The disordered stretch occupies residues 418 to 447 (REMEERETEVTGAVGTAEPHTGVSMETVST).

In terms of assembly, heterotetramer of two alpha and two beta subunits. The C-terminal is necessary for the formation of a heterotetrameric GABP-alpha-2/beta-2 complex, and also facilitates homotypic dimerization. Interacts with ADGRB2.

The protein resides in the nucleus. In terms of biological role, may function as transcription factor capable of interacting with purine rich repeats (GA repeats). The chain is GA-binding protein subunit beta-2 (GABPB2) from Bos taurus (Bovine).